The chain runs to 360 residues: Phosphoserine aminotransferase (360 aa).

Arg42 serves as a coordination point for L-glutamate. Pyridoxal 5'-phosphate is bound by residues Trp102, Thr152, Asp171, and Gln194. At Lys195 the chain carries N6-(pyridoxal phosphate)lysine. A pyridoxal 5'-phosphate-binding site is contributed by 237–238 (NT).

Belongs to the class-V pyridoxal-phosphate-dependent aminotransferase family. SerC subfamily. In terms of assembly, homodimer. Requires pyridoxal 5'-phosphate as cofactor.

Its subcellular location is the cytoplasm. It carries out the reaction O-phospho-L-serine + 2-oxoglutarate = 3-phosphooxypyruvate + L-glutamate. It catalyses the reaction 4-(phosphooxy)-L-threonine + 2-oxoglutarate = (R)-3-hydroxy-2-oxo-4-phosphooxybutanoate + L-glutamate. Its pathway is amino-acid biosynthesis; L-serine biosynthesis; L-serine from 3-phospho-D-glycerate: step 2/3. It participates in cofactor biosynthesis; pyridoxine 5'-phosphate biosynthesis; pyridoxine 5'-phosphate from D-erythrose 4-phosphate: step 3/5. Functionally, catalyzes the reversible conversion of 3-phosphohydroxypyruvate to phosphoserine and of 3-hydroxy-2-oxo-4-phosphonooxybutanoate to phosphohydroxythreonine. This is Phosphoserine aminotransferase from Coxiella burnetii (strain RSA 331 / Henzerling II).